The primary structure comprises 215 residues: Cytidylate kinase (215 aa).

An ATP-binding site is contributed by 10–18 (GPAASGKGT).

Belongs to the cytidylate kinase family. Type 1 subfamily.

Its subcellular location is the cytoplasm. The catalysed reaction is CMP + ATP = CDP + ADP. It catalyses the reaction dCMP + ATP = dCDP + ADP. This Bartonella henselae (strain ATCC 49882 / DSM 28221 / CCUG 30454 / Houston 1) (Rochalimaea henselae) protein is Cytidylate kinase.